Consider the following 487-residue polypeptide: Protein nucleotidyltransferase YdiU (487 aa).

The ATP site is built by Gly-86, Gly-88, Arg-89, Lys-109, Asp-121, Gly-122, Arg-172, and Arg-179. The Proton acceptor role is filled by Asp-248. Asn-249 and Asp-258 together coordinate Mg(2+). An ATP-binding site is contributed by Asp-258.

This sequence belongs to the SELO family. Mg(2+) serves as cofactor. The cofactor is Mn(2+).

The catalysed reaction is L-seryl-[protein] + ATP = 3-O-(5'-adenylyl)-L-seryl-[protein] + diphosphate. It carries out the reaction L-threonyl-[protein] + ATP = 3-O-(5'-adenylyl)-L-threonyl-[protein] + diphosphate. The enzyme catalyses L-tyrosyl-[protein] + ATP = O-(5'-adenylyl)-L-tyrosyl-[protein] + diphosphate. It catalyses the reaction L-histidyl-[protein] + UTP = N(tele)-(5'-uridylyl)-L-histidyl-[protein] + diphosphate. The catalysed reaction is L-seryl-[protein] + UTP = O-(5'-uridylyl)-L-seryl-[protein] + diphosphate. It carries out the reaction L-tyrosyl-[protein] + UTP = O-(5'-uridylyl)-L-tyrosyl-[protein] + diphosphate. Functionally, nucleotidyltransferase involved in the post-translational modification of proteins. It can catalyze the addition of adenosine monophosphate (AMP) or uridine monophosphate (UMP) to a protein, resulting in modifications known as AMPylation and UMPylation. The sequence is that of Protein nucleotidyltransferase YdiU from Sphingopyxis alaskensis (strain DSM 13593 / LMG 18877 / RB2256) (Sphingomonas alaskensis).